The chain runs to 225 residues: Probable septum site-determining protein MinC (225 aa).

This sequence belongs to the MinC family. As to quaternary structure, interacts with MinD and FtsZ.

Functionally, cell division inhibitor that blocks the formation of polar Z ring septums. Rapidly oscillates between the poles of the cell to destabilize FtsZ filaments that have formed before they mature into polar Z rings. Prevents FtsZ polymerization. In Listeria monocytogenes serotype 4a (strain HCC23), this protein is Probable septum site-determining protein MinC.